We begin with the raw amino-acid sequence, 330 residues long: T-cell surface glycoprotein CD1b4 (330 aa).

Residues 1–15 (MLLLALAFFFPAGDT) form the signal peptide. The Extracellular segment spans residues 16 to 299 (QNVLPGKISF…LYWGHSISIG (284 aa)). N35, N72, and N143 each carry an N-linked (GlcNAc...) asparagine glycan. Intrachain disulfides connect C117-C181 and C221-C276. One can recognise an Ig-like domain in the interval 182 to 292 (PRYLMSVIEA…LEGQDIILYW (111 aa)). Residues 300-320 (WIILAVLVPCLIVLVLFILWF) form a helical membrane-spanning segment. The Cytoplasmic segment spans residues 321 to 330 (YRRWSYEDIF). Positions 326–329 (YEDI) match the Internalization signal motif.

Heterodimer with B2M (beta-2-microglobulin). Interacts with saposin C.

The protein resides in the cell membrane. It localises to the endosome membrane. Its subcellular location is the lysosome membrane. Its function is as follows. Antigen-presenting protein that binds self and non-self lipid and glycolipid antigens and presents them to T-cell receptors on natural killer T-cells. The chain is T-cell surface glycoprotein CD1b4 (CD1B4) from Cavia porcellus (Guinea pig).